We begin with the raw amino-acid sequence, 248 residues long: Triosephosphate isomerase B (248 aa).

Positions 11 and 13 each coordinate substrate. Catalysis depends on histidine 95, which acts as the Electrophile. Catalysis depends on glutamate 165, which acts as the Proton acceptor.

It belongs to the triosephosphate isomerase family. Homodimer.

It localises to the cytoplasm. It catalyses the reaction dihydroxyacetone phosphate = methylglyoxal + phosphate. The catalysed reaction is D-glyceraldehyde 3-phosphate = dihydroxyacetone phosphate. Its pathway is carbohydrate degradation; glycolysis; D-glyceraldehyde 3-phosphate from glycerone phosphate: step 1/1. It functions in the pathway carbohydrate biosynthesis; gluconeogenesis. In terms of biological role, triosephosphate isomerase is an extremely efficient metabolic enzyme that catalyzes the interconversion between dihydroxyacetone phosphate (DHAP) and D-glyceraldehyde-3-phosphate (G3P) in glycolysis and gluconeogenesis. Its function is as follows. It is also responsible for the non-negligible production of methylglyoxal a reactive cytotoxic side-product that modifies and can alter proteins, DNA and lipids. This chain is Triosephosphate isomerase B (tpi1b), found in Danio rerio (Zebrafish).